Here is a 2334-residue protein sequence, read N- to C-terminus: Centriolin (2334 aa).

The interval 1 to 70 is disordered; the sequence is MKKGSERRLS…ESTVPLEPQQ (70 aa). The segment covering 21–38 has biased composition (low complexity); the sequence is PGPSSLRSSMRSRSLSPL. LRR repeat units follow at residues 126–147, 148–169, 170–191, and 194–215; these read KLEV…DKLL, RLRE…ENMC, NLQK…FAKK, and SLRV…SKLK. The 39-residue stretch at 228–266 folds into the LRRCT domain; that stretch reads NPVVALPHYLQFIIFHLRSLESLEGQPVTTQDRQEAFER. 2 coiled-coil regions span residues 265–343 and 437–800; these read ERFS…VELT and DLQL…LNHV. Disordered regions lie at residues 542–562 and 751–771; these read DSLD…RGKE and SLRD…ENNE. Phosphoserine is present on Ser832. Residues 858–1102 are a coiled coil; sequence EKEEAQVRER…ITRLRDVLNL (245 aa). 3 disordered regions span residues 1154–1198, 1213–1245, and 1338–1360; these read SKVS…PLPA, KSFS…VPPP, and LKSK…EEVD. The segment covering 1227–1238 has biased composition (acidic residues); the sequence is SQEESGLDDQEE. Residues 1320 to 2169 are a coiled coil; sequence EHHNLENEVS…MRTLKSEVKD (850 aa). Ser1478 is modified (phosphoserine). A required for centrosome localization region spans residues 1951-2121; it reads MMFQKLQKER…ELVAQDNHER (171 aa). Residues 1988–2334 form a sufficient for interaction with HOOK2 region; the sequence is QKSRLKQLLT…PLEEPNSYRH (347 aa). Positions 2291-2307 are enriched in low complexity; that stretch reads TSTSTDSASSPSLPSLV. The interval 2291-2334 is disordered; sequence TSTSTDSASSPSLPSLVEDSQHGHSQSSFQVLQVPLEEPNSYRH.

Interacts with HOOK2. Interacts with EXOC6 and SNAPIN. Associates with the exocyst complex. Highly expressed in liver.

It localises to the cytoplasm. The protein resides in the cytoskeleton. Its subcellular location is the microtubule organizing center. It is found in the centrosome. The protein localises to the midbody. It localises to the midbody ring. In terms of biological role, involved in cell cycle progression and cytokinesis. During the late steps of cytokinesis, anchors exocyst and SNARE complexes at the midbody, thereby allowing secretory vesicle-mediated abscission. The sequence is that of Centriolin (Cntrl) from Mus musculus (Mouse).